The sequence spans 163 residues: Acetolactate synthase isozyme 3 small subunit (163 aa).

The ACT domain occupies 4-78 (ILSVLLENES…DVLRVSELGQ (75 aa)).

The protein belongs to the acetolactate synthase small subunit family. Dimer of large and small chains.

The enzyme catalyses 2 pyruvate + H(+) = (2S)-2-acetolactate + CO2. The protein operates within amino-acid biosynthesis; L-isoleucine biosynthesis; L-isoleucine from 2-oxobutanoate: step 1/4. It functions in the pathway amino-acid biosynthesis; L-valine biosynthesis; L-valine from pyruvate: step 1/4. Sensitive to valine inhibition. This is Acetolactate synthase isozyme 3 small subunit (ilvH) from Salmonella typhimurium (strain LT2 / SGSC1412 / ATCC 700720).